The sequence spans 209 residues: Thiamine-phosphate synthase (209 aa).

Residues glutamine 37–lysine 41 and asparagine 69 each bind 4-amino-2-methyl-5-(diphosphooxymethyl)pyrimidine. Mg(2+) contacts are provided by aspartate 70 and aspartate 89. Serine 108 contacts 4-amino-2-methyl-5-(diphosphooxymethyl)pyrimidine. Serine 135–threonine 137 provides a ligand contact to 2-[(2R,5Z)-2-carboxy-4-methylthiazol-5(2H)-ylidene]ethyl phosphate. Lysine 138 contributes to the 4-amino-2-methyl-5-(diphosphooxymethyl)pyrimidine binding site. 2-[(2R,5Z)-2-carboxy-4-methylthiazol-5(2H)-ylidene]ethyl phosphate-binding positions include glycine 165 and valine 185 to serine 186.

It belongs to the thiamine-phosphate synthase family. Mg(2+) serves as cofactor.

It carries out the reaction 2-[(2R,5Z)-2-carboxy-4-methylthiazol-5(2H)-ylidene]ethyl phosphate + 4-amino-2-methyl-5-(diphosphooxymethyl)pyrimidine + 2 H(+) = thiamine phosphate + CO2 + diphosphate. The enzyme catalyses 2-(2-carboxy-4-methylthiazol-5-yl)ethyl phosphate + 4-amino-2-methyl-5-(diphosphooxymethyl)pyrimidine + 2 H(+) = thiamine phosphate + CO2 + diphosphate. The catalysed reaction is 4-methyl-5-(2-phosphooxyethyl)-thiazole + 4-amino-2-methyl-5-(diphosphooxymethyl)pyrimidine + H(+) = thiamine phosphate + diphosphate. The protein operates within cofactor biosynthesis; thiamine diphosphate biosynthesis; thiamine phosphate from 4-amino-2-methyl-5-diphosphomethylpyrimidine and 4-methyl-5-(2-phosphoethyl)-thiazole: step 1/1. Condenses 4-methyl-5-(beta-hydroxyethyl)thiazole monophosphate (THZ-P) and 2-methyl-4-amino-5-hydroxymethyl pyrimidine pyrophosphate (HMP-PP) to form thiamine monophosphate (TMP). The chain is Thiamine-phosphate synthase from Halorhodospira halophila (strain DSM 244 / SL1) (Ectothiorhodospira halophila (strain DSM 244 / SL1)).